The sequence spans 220 residues: Peptide methionine sulfoxide reductase MsrA (220 aa).

Cys-52 is an active-site residue.

The protein belongs to the MsrA Met sulfoxide reductase family.

The catalysed reaction is L-methionyl-[protein] + [thioredoxin]-disulfide + H2O = L-methionyl-(S)-S-oxide-[protein] + [thioredoxin]-dithiol. It carries out the reaction [thioredoxin]-disulfide + L-methionine + H2O = L-methionine (S)-S-oxide + [thioredoxin]-dithiol. Has an important function as a repair enzyme for proteins that have been inactivated by oxidation. Catalyzes the reversible oxidation-reduction of methionine sulfoxide in proteins to methionine. The protein is Peptide methionine sulfoxide reductase MsrA of Corynebacterium diphtheriae (strain ATCC 700971 / NCTC 13129 / Biotype gravis).